Consider the following 326-residue polypeptide: L-Ala--D-Glu endopeptidase (326 aa).

The signal sequence occupies residues 1–19 (MKVLLSALLLLLFAFEPSA). Residues His-204, Asp-208, His-292, and His-294 each contribute to the Zn(2+) site.

The protein belongs to the peptidase M23B family. Requires Zn(2+) as cofactor.

L-Ala--D-Glu endopeptidase involved in production of single L-alanine side chains from tetrapeptides in the spore cortex peptidoglycan. Therefore, is required for the endospore cortex maturation. The protein is L-Ala--D-Glu endopeptidase (lytH) of Bacillus subtilis (strain 168).